Consider the following 306-residue polypeptide: MSNWLVDKLIPSIMRSEVKKSSVPEGLWHKCPSCEAVLYRPELEKTLDVCPKCNHHMRIGARARIDIFLDAEGRAELGADLEPVDRLKFRDGKKYKDRLTAAQKQTGEKDALISMSGTLLGMPVVVSAFEFSFMGGSMGAIVGERFVRAANYALEKRCPMICFSASGGARMQEALISLMQMAKTSAVLARLREEGIPFISVLTDPVYGGVSASLAMLGDVIVAEPKALVGFAGPRVIEQTVREKLPEGFQRSEFLLEHGAIDMIISRQELRPRLGNLLAQLMGLPTPEFVAAPVEPIVVPPAPANL.

The CoA carboxyltransferase N-terminal domain maps to 27 to 296 (LWHKCPSCEA…PEFVAAPVEP (270 aa)). Zn(2+)-binding residues include Cys31, Cys34, Cys50, and Cys53. Residues 31–53 (CPSCEAVLYRPELEKTLDVCPKC) form a C4-type zinc finger.

It belongs to the AccD/PCCB family. As to quaternary structure, acetyl-CoA carboxylase is a heterohexamer composed of biotin carboxyl carrier protein (AccB), biotin carboxylase (AccC) and two subunits each of ACCase subunit alpha (AccA) and ACCase subunit beta (AccD). The cofactor is Zn(2+).

The protein localises to the cytoplasm. The catalysed reaction is N(6)-carboxybiotinyl-L-lysyl-[protein] + acetyl-CoA = N(6)-biotinyl-L-lysyl-[protein] + malonyl-CoA. It functions in the pathway lipid metabolism; malonyl-CoA biosynthesis; malonyl-CoA from acetyl-CoA: step 1/1. Functionally, component of the acetyl coenzyme A carboxylase (ACC) complex. Biotin carboxylase (BC) catalyzes the carboxylation of biotin on its carrier protein (BCCP) and then the CO(2) group is transferred by the transcarboxylase to acetyl-CoA to form malonyl-CoA. The protein is Acetyl-coenzyme A carboxylase carboxyl transferase subunit beta of Pseudomonas fluorescens (strain ATCC BAA-477 / NRRL B-23932 / Pf-5).